Consider the following 491-residue polypeptide: Aspartyl/glutamyl-tRNA(Asn/Gln) amidotransferase subunit B (491 aa).

This sequence belongs to the GatB/GatE family. GatB subfamily. Heterotrimer of A, B and C subunits.

It carries out the reaction L-glutamyl-tRNA(Gln) + L-glutamine + ATP + H2O = L-glutaminyl-tRNA(Gln) + L-glutamate + ADP + phosphate + H(+). It catalyses the reaction L-aspartyl-tRNA(Asn) + L-glutamine + ATP + H2O = L-asparaginyl-tRNA(Asn) + L-glutamate + ADP + phosphate + 2 H(+). In terms of biological role, allows the formation of correctly charged Asn-tRNA(Asn) or Gln-tRNA(Gln) through the transamidation of misacylated Asp-tRNA(Asn) or Glu-tRNA(Gln) in organisms which lack either or both of asparaginyl-tRNA or glutaminyl-tRNA synthetases. The reaction takes place in the presence of glutamine and ATP through an activated phospho-Asp-tRNA(Asn) or phospho-Glu-tRNA(Gln). This is Aspartyl/glutamyl-tRNA(Asn/Gln) amidotransferase subunit B from Burkholderia cenocepacia (strain HI2424).